The sequence spans 87 residues: Developmentally-regulated ectodermal protein (87 aa).

A signal peptide spans 1–16 (MKRLLVLTLVSAILMA).

This chain is Developmentally-regulated ectodermal protein, found in Tripneustes gratilla (Hawaian sea urchin).